The primary structure comprises 340 residues: Guanine nucleotide-binding protein G(I)/G(S)/G(T) subunit beta-1 (340 aa).

WD repeat units follow at residues 53–83, 95–125, 141–170, 182–212, 224–254, 268–298, and 310–340; these read GHLAKIYAMHWGTDSRLLVSASQDGKLIIWD, LRSSWVMTCAYAPSGNYVACGGLDNICSIYN, GHTGYLSCCRFLDDNQIVTSSGDTTCALWD, GHTGDVMSLSLAPDTRLFVSGACDASAKLWD, GHESDINAICFFPNGNAFATGSDDATCRLFD, NIICGITSVAFSKSGRLLLAGYDDFNCNVWD, and GHDNRVSCLGVTDDGMAVATGSWDSFLKIWN.

The protein belongs to the WD repeat G protein beta family. As to quaternary structure, g proteins are composed of 3 units, alpha, beta and gamma.

Its function is as follows. Guanine nucleotide-binding proteins (G proteins) are involved as a modulator or transducer in various transmembrane signaling systems. The beta and gamma chains are required for the GTPase activity, for replacement of GDP by GTP, and for G protein-effector interaction. This Danio rerio (Zebrafish) protein is Guanine nucleotide-binding protein G(I)/G(S)/G(T) subunit beta-1 (gnb1).